We begin with the raw amino-acid sequence, 320 residues long: (+)-corvol ether B synthase/(+)-corvol ether A synthase ((2E,6E)-farnesyl diphosphate cyclizing) (320 aa).

The Mg(2+) site is built by Asp78 and Asp83. The short motif at 78 to 83 (DDLFVD) is the DDXXXD motif element. Arg171 provides a ligand contact to substrate. Residues Asn217, Ser221, and Glu225 each coordinate Mg(2+).

The protein belongs to the terpene synthase family. Mg(2+) is required as a cofactor.

It catalyses the reaction (2E,6E)-farnesyl diphosphate + H2O = (+)-corvol ether B + diphosphate. The enzyme catalyses (2E,6E)-farnesyl diphosphate + H2O = (+)-corvol ether A + diphosphate. It participates in secondary metabolite biosynthesis; terpenoid biosynthesis. Its function is as follows. Catalyzes the conversion of (2E,6E)-farnesyl diphosphate (FPP) into (+)-corvol ether A and (+)-corvol ether B via a 1,10-cyclization, which requires isomerization of FPP to nerolidyl diphosphate (NPP) and then abstraction of the pyrophosphate from intermediate NPP leading to a (E,Z)-germacradienyl (helminthogermacradienyl) cation. The preferred substrate is (2E,6E)-farnesyl diphosphate (FPP), however geranyl diphosphate (GPP) is also able to produce small amounts of several acyclic and cyclic monoterpenes, with linalool as the main product. In Kitasatospora setae (strain ATCC 33774 / DSM 43861 / JCM 3304 / KCC A-0304 / NBRC 14216 / KM-6054) (Streptomyces setae), this protein is (+)-corvol ether B synthase/(+)-corvol ether A synthase ((2E,6E)-farnesyl diphosphate cyclizing).